Consider the following 395-residue polypeptide: Putative transport protein sll0063 (395 aa).

8 consecutive transmembrane segments (helical) span residues 24-44 (LNAI…VLNA), 50-70 (IFGY…IAFL), 91-111 (FVFL…IPLA), 180-200 (VFTV…FYLL), 245-265 (ALGL…LFGL), 269-289 (VMAL…FLVA), 295-315 (MALQ…NGIA), and 328-348 (FWVL…GVIV).

Belongs to the autoinducer-2 exporter (AI-2E) (TC 2.A.86) family.

The protein resides in the cell membrane. This Synechocystis sp. (strain ATCC 27184 / PCC 6803 / Kazusa) protein is Putative transport protein sll0063.